The sequence spans 855 residues: DNA mismatch repair protein MutS (855 aa).

616–623 (GPNMGGKS) is an ATP binding site.

Belongs to the DNA mismatch repair MutS family.

Functionally, this protein is involved in the repair of mismatches in DNA. It is possible that it carries out the mismatch recognition step. This protein has a weak ATPase activity. This chain is DNA mismatch repair protein MutS, found in Salmonella paratyphi A (strain ATCC 9150 / SARB42).